Reading from the N-terminus, the 180-residue chain is Centromere protein M (180 aa).

Component of the CENPA-NAC complex, at least composed of CENPA, CENPC, CENPH, CENPM, CENPN, CENPT and CENPU. The CENPA-NAC complex interacts with the CENPA-CAD complex, composed of CENPI, CENPK, CENPL, CENPO, CENPP, CENPQ, CENPR and CENPS. Isoform 3 is highly expressed in spleen, and intermediately in heart, prostate and ovary. Isoform 3 is highly expressed in resting CD19 B-cells and B-lineage chronic lymphocytic leukemia (B-CLL) cells and weakly expressed in activated B-cells. Isoform 1 is selectively expressed in activated CD19 cells and weakly in resting CD19 B-cells.

It localises to the nucleus. Its subcellular location is the cytoplasm. It is found in the chromosome. The protein localises to the centromere. The protein resides in the kinetochore. Functionally, component of the CENPA-NAC (nucleosome-associated) complex, a complex that plays a central role in assembly of kinetochore proteins, mitotic progression and chromosome segregation. The CENPA-NAC complex recruits the CENPA-CAD (nucleosome distal) complex and may be involved in incorporation of newly synthesized CENPA into centromeres. The chain is Centromere protein M (CENPM) from Homo sapiens (Human).